The primary structure comprises 336 residues: Sex determination protein tasselseed-2 (336 aa).

Residue 59–83 (IVTGGARGIGEAIVRLFAKHGARVV) coordinates NAD(+). Ser194 is a substrate binding site. Tyr207 serves as the catalytic Proton acceptor.

This sequence belongs to the short-chain dehydrogenases/reductases (SDR) family.

Required for stage-specific floral organ abortion. The polypeptide is Sex determination protein tasselseed-2 (TS2) (Zea mays (Maize)).